Here is a 343-residue protein sequence, read N- to C-terminus: tRNA-splicing endonuclease (343 aa).

Catalysis depends on residues Tyr-277, His-288, and Lys-319.

The protein belongs to the tRNA-intron endonuclease family. Archaeal long subfamily. In terms of assembly, homodimer.

It catalyses the reaction pretRNA = a 3'-half-tRNA molecule with a 5'-OH end + a 5'-half-tRNA molecule with a 2',3'-cyclic phosphate end + an intron with a 2',3'-cyclic phosphate and a 5'-hydroxyl terminus.. Functionally, endonuclease that removes tRNA introns. Cleaves pre-tRNA at the 5' and 3' splice sites to release the intron. The products are an intron and two tRNA half-molecules bearing 2',3' cyclic phosphate and 5'-OH termini. Recognizes a pseudosymmetric substrate in which 2 bulged loops of 3 bases are separated by a stem of 4 bp. The sequence is that of tRNA-splicing endonuclease from Halobacterium salinarum (strain ATCC 29341 / DSM 671 / R1).